A 112-amino-acid polypeptide reads, in one-letter code: MCVDCVEKEYPNRGNICLESGSFLLNFTGCAVCNKRDFMLITNKSLKEEDGEEIVTYDHLCKNCHHVIARHEYTFSIMDEFQEYTMLCLLCGKAEDTISILPDDPRQMTLLF.

Positions 2, 5, 30, 33, 59, 61, 64, 66, 71, 88, and 91 each coordinate Zn(2+).

This sequence belongs to the Churchill family.

In terms of biological role, transcriptional activator that mediates FGF signaling during neural development. Plays a role in the regulation of cell movement. Does not bind DNA by itself. In Bos taurus (Bovine), this protein is Protein Churchill (CHURC1).